The chain runs to 278 residues: Non-homologous end joining protein Ku (278 aa).

Positions 9-172 constitute a Ku domain; it reads ISFGLVNIPV…MHFAQELVDV (164 aa). Positions 255–278 are disordered; the sequence is NQTGAGAKKKPAKTAKRGKSRKAA. Over residues 261–278 the composition is skewed to basic residues; sequence AKKKPAKTAKRGKSRKAA.

The protein belongs to the prokaryotic Ku family. Homodimer. Interacts with LigD.

Its function is as follows. With LigD forms a non-homologous end joining (NHEJ) DNA repair enzyme, which repairs dsDNA breaks with reduced fidelity. Binds linear dsDNA with 5'- and 3'- overhangs but not closed circular dsDNA nor ssDNA. Recruits and stimulates the ligase activity of LigD. The protein is Non-homologous end joining protein Ku of Opitutus terrae (strain DSM 11246 / JCM 15787 / PB90-1).